Reading from the N-terminus, the 404-residue chain is Phosphopentomutase (404 aa).

6 residues coordinate Mn(2+): Asp-10, Asp-303, His-308, Asp-344, His-345, and His-356.

This sequence belongs to the phosphopentomutase family. The cofactor is Mn(2+).

It localises to the cytoplasm. It carries out the reaction 2-deoxy-alpha-D-ribose 1-phosphate = 2-deoxy-D-ribose 5-phosphate. The catalysed reaction is alpha-D-ribose 1-phosphate = D-ribose 5-phosphate. Its pathway is carbohydrate degradation; 2-deoxy-D-ribose 1-phosphate degradation; D-glyceraldehyde 3-phosphate and acetaldehyde from 2-deoxy-alpha-D-ribose 1-phosphate: step 1/2. Isomerase that catalyzes the conversion of deoxy-ribose 1-phosphate (dRib-1-P) and ribose 1-phosphate (Rib-1-P) to deoxy-ribose 5-phosphate (dRib-5-P) and ribose 5-phosphate (Rib-5-P), respectively. The polypeptide is Phosphopentomutase (Shewanella oneidensis (strain ATCC 700550 / JCM 31522 / CIP 106686 / LMG 19005 / NCIMB 14063 / MR-1)).